We begin with the raw amino-acid sequence, 355 residues long: Phosphoribosylformylglycinamidine cyclo-ligase (355 aa).

The protein belongs to the AIR synthase family.

Its subcellular location is the cytoplasm. It catalyses the reaction 2-formamido-N(1)-(5-O-phospho-beta-D-ribosyl)acetamidine + ATP = 5-amino-1-(5-phospho-beta-D-ribosyl)imidazole + ADP + phosphate + H(+). Its pathway is purine metabolism; IMP biosynthesis via de novo pathway; 5-amino-1-(5-phospho-D-ribosyl)imidazole from N(2)-formyl-N(1)-(5-phospho-D-ribosyl)glycinamide: step 2/2. The polypeptide is Phosphoribosylformylglycinamidine cyclo-ligase (Methylobacterium sp. (strain 4-46)).